Reading from the N-terminus, the 948-residue chain is Protocadherin alpha-10 (948 aa).

The first 28 residues, 1–28 (MVSRCSCLGVQCLLLSLLLLAAWEVGSG), serve as a signal peptide directing secretion. Cadherin domains are found at residues 29 to 132 (QLHY…PPRF), 133 to 241 (SVTE…APIF), 242 to 349 (DRPV…SPEV), 350 to 454 (IVTS…APAF), 455 to 564 (AQPE…APAL), and 587 to 689 (GHVV…APEV). The Extracellular portion of the chain corresponds to 29–695 (QLHYSVYEEA…APEVALVDVN (667 aa)). N256 and N264 each carry an N-linked (GlcNAc...) asparagine glycan. An N-linked (GlcNAc...) asparagine glycan is attached at N547. A helical membrane pass occupies residues 696–716 (VYLIIAICAVSSLLVLTLLLY). Residues 717–948 (TALRCSAAPT…GNSTTDNSDQ (232 aa)) lie on the Cytoplasmic side of the membrane. 6 PXXP repeats span residues 732–735 (PVKP), 772–775 (PSLP), 797–800 (PRQP), 830–833 (PGGP), 871–874 (PGNP), and 889–892 (PGSP). The segment at 732 to 892 (PVKPTLVCSS…PDKFIIPGSP (161 aa)) is 6 X 4 AA repeats of P-X-X-P. Disordered stretches follow at residues 783 to 804 (DGED…NPDW) and 827 to 948 (RAGP…NSDQ). Over residues 907–921 (DKSDFITFGKKEETK) the composition is skewed to basic and acidic residues.

The protein localises to the cell membrane. Potential calcium-dependent cell-adhesion protein. May be involved in the establishment and maintenance of specific neuronal connections in the brain. The chain is Protocadherin alpha-10 (PCDHA10) from Pan troglodytes (Chimpanzee).